A 705-amino-acid chain; its full sequence is Tyrosine decarboxylase (705 aa).

Polar residues predominate over residues 22–32 (RIRNSLSPSRP). Residues 22–81 (RIRNSLSPSRPSMSEATATGSSSSSRASTTIPSTPNMDVTPTVEDPRQNDNNASGMTRDE) are disordered. The segment covering 33–55 (SMSEATATGSSSSSRASTTIPST) has biased composition (low complexity). Lys-380 is modified (N6-(pyridoxal phosphate)lysine). A coiled-coil region spans residues 554–620 (VKAVIAEEDE…AQKQHESLAK (67 aa)). Residues 667 to 678 (HSQRPNRLSQSP) are compositionally biased toward polar residues. Residues 667–687 (HSQRPNRLSQSPGSAGSAFFD) are disordered.

Belongs to the group II decarboxylase family. Pyridoxal 5'-phosphate serves as cofactor. In terms of tissue distribution, expressed in the gonadal sheath projections in between the oocytes, in head RIM motor neurons and RIC interneurons.

The protein localises to the cytoplasm. It is found in the cell projection. Its subcellular location is the axon. The protein resides in the perikaryon. It catalyses the reaction L-tyrosine + H(+) = tyramine + CO2. Its function is as follows. Required for the decarboxylation of tyrosine to tyramine, a precursor of octopamine but probably also itself a neurotransmitter. Involved in the regulation of egg laying, which is inhibited by tyramine. Also involved in controlling locomotion and head movements. Due to its involvement in octopamine biosynthesis, also required for crtc-1-dependent regulation of AMPK-mediated longevity which requires octopamine signaling. This is Tyrosine decarboxylase from Caenorhabditis elegans.